Reading from the N-terminus, the 392-residue chain is Homeobox protein engrailed-1 (392 aa).

4 disordered regions span residues 1 to 100 (MEEQ…AQLH), 132 to 164 (ARGG…TRAP), 219 to 251 (KPSD…PAIL), and 282 to 306 (SDRP…DKRP). A compositionally biased stretch (low complexity) spans 14–36 (SALGAAAAATPGGLSLSLSPGAS). Pro residues-rich tracts occupy residues 51–66 (SPQP…PCLP) and 75–84 (PPHPPPPPPQ). Positions 85 to 100 (HLAAPAHQPQPAAQLH) are enriched in low complexity. Over residues 223-236 (TGGGGSGGGAGSPG) the composition is skewed to gly residues. The segment at residues 303 to 362 (DKRPRTAFTAEQLQRLKAEFQANRYITEQRRQTLAQELSLNESQIKIWFQNKRAKIKKAT) is a DNA-binding region (homeobox).

This sequence belongs to the engrailed homeobox family.

It is found in the nucleus. In terms of biological role, required for proper formation of the apical ectodermal ridge and correct dorsal-ventral patterning in the limb. In Homo sapiens (Human), this protein is Homeobox protein engrailed-1 (EN1).